A 170-amino-acid chain; its full sequence is Large ribosomal subunit protein uL5 (170 aa).

The protein belongs to the universal ribosomal protein uL5 family. As to quaternary structure, part of the 50S ribosomal subunit; contacts the 5S rRNA and probably tRNA. Forms a bridge to the 30S subunit in the 70S ribosome.

Its function is as follows. This is one of the proteins that bind and probably mediate the attachment of the 5S RNA into the large ribosomal subunit, where it forms part of the central protuberance. In the 70S ribosome it contacts protein S13 of the 30S subunit (bridge B1b), connecting the 2 subunits; this bridge is implicated in subunit movement. May contact the P site tRNA; the 5S rRNA and some of its associated proteins might help stabilize positioning of ribosome-bound tRNAs. The chain is Large ribosomal subunit protein uL5 from Methanobrevibacter smithii (strain ATCC 35061 / DSM 861 / OCM 144 / PS).